We begin with the raw amino-acid sequence, 625 residues long: Tyrosine-protein kinase ITK/TSK (625 aa).

Residues 4–117 enclose the PH domain; it reads FILLEEQLIK…WVLTLKEETR (114 aa). The segment at 119-155 adopts a Btk-type zinc-finger fold; that stretch reads NNSLVSKYHPNFWMDGRWRCCSQLEKPAVGCAPYDPS. His-127, Cys-138, Cys-139, and Cys-149 together coordinate Zn(2+). The tract at residues 153–174 is disordered; that stretch reads DPSKNASKKPLPPTPEDNRRSF. Residues 177–237 form the SH3 domain; it reads PEETLVIALY…PSSYLVEKSP (61 aa). The residue at position 186 (Tyr-186) is a Phosphotyrosine; by autocatalysis. The SH2 domain maps to 245 to 343; it reads WYNKSISRDK…GLVTRLRYPV (99 aa). The Protein kinase domain occupies 368–620; sequence LTFVQEIGSG…SQLLSQLAEI (253 aa). Residues 374–382 and Lys-396 each bind ATP; that span reads IGSGQFGLV. The Proton acceptor role is filled by Asp-487. A Phosphotyrosine; by LCK modification is found at Tyr-517. Ser-570 is modified (phosphoserine).

This sequence belongs to the protein kinase superfamily. Tyr protein kinase family. TEC subfamily. Homooligomerizes; this association negatively regulates kinase activity. Interacts with PPIA/CYPA; this interaction regulates TCR signal strength via a proline-directed conformational switch in ITK. Interacts with THEMIS. Interacts with FASLG. Interacts with VAV1; this interaction is important for VAV1 localization and TCR-induced actin polarization. Interacts with TBX21. Requires Zn(2+) as cofactor. Post-translationally, phosphorylated at Tyr-517 in the activation loop of the kinase domain by LCK. Subsequent autophosphorylation at Tyr-186 leads to the kinase activation. The autophosphorylated Tyr-186 lies within the substrate binding sequence of the SH3 domain. Ubiquitinated. As to expression, is detected in the thymus, lymph node and very faintly in the spleen, but is not detected in the liver, lung, kidney, heart, brain, intestine or testis. Expressed in T-lymphocytes and mast cells. It may also be expressed in natural killer cells.

Its subcellular location is the cytoplasm. The protein resides in the nucleus. It carries out the reaction L-tyrosyl-[protein] + ATP = O-phospho-L-tyrosyl-[protein] + ADP + H(+). Functionally, tyrosine kinase that plays an essential role in regulation of the adaptive immune response. Regulates the development, function and differentiation of conventional T-cells and nonconventional NKT-cells. When antigen presenting cells (APC) activate T-cell receptor (TCR), a series of phosphorylation lead to the recruitment of ITK to the cell membrane, in the vicinity of the stimulated TCR receptor, where it is phosphorylated by LCK. Phosphorylation leads to ITK autophosphorylation and full activation. Once activated, phosphorylates PLCG1, leading to the activation of this lipase and subsequent cleavage of its substrates. In turn, the endoplasmic reticulum releases calcium in the cytoplasm and the nuclear activator of activated T-cells (NFAT) translocates into the nucleus to perform its transcriptional duty. Phosphorylates 2 essential adapter proteins: the linker for activation of T-cells/LAT protein and LCP2. Then, a large number of signaling molecules such as VAV1 are recruited and ultimately lead to lymphokine production, T-cell proliferation and differentiation. Required for TCR-mediated calcium response in gamma-delta T-cells, may also be involved in the modulation of the transcriptomic signature in the Vgamma2-positive subset of immature gamma-delta T-cells. Phosphorylates TBX21 at 'Tyr-525' and mediates its interaction with GATA3. In Mus musculus (Mouse), this protein is Tyrosine-protein kinase ITK/TSK (Itk).